Consider the following 142-residue polypeptide: Galactose-6-phosphate isomerase subunit LacA (142 aa).

Belongs to the LacAB/RpiB family. Heteromultimeric protein consisting of LacA and LacB.

It carries out the reaction aldehydo-D-galactose 6-phosphate = keto-D-tagatose 6-phosphate. Its pathway is carbohydrate metabolism; D-galactose 6-phosphate degradation; D-tagatose 6-phosphate from D-galactose 6-phosphate: step 1/1. The chain is Galactose-6-phosphate isomerase subunit LacA from Staphylococcus epidermidis (strain ATCC 35984 / DSM 28319 / BCRC 17069 / CCUG 31568 / BM 3577 / RP62A).